We begin with the raw amino-acid sequence, 626 residues long: Fructose-1,6-bisphosphatase class 3 (626 aa).

This sequence belongs to the FBPase class 3 family. Mn(2+) is required as a cofactor.

It catalyses the reaction beta-D-fructose 1,6-bisphosphate + H2O = beta-D-fructose 6-phosphate + phosphate. Its pathway is carbohydrate biosynthesis; gluconeogenesis. The chain is Fructose-1,6-bisphosphatase class 3 from Enterococcus faecalis (strain ATCC 700802 / V583).